The following is a 429-amino-acid chain: Ribosomal RNA small subunit methyltransferase B (429 aa).

S-adenosyl-L-methionine is bound by residues 254 to 260, D277, D303, and D322; that span reads CAAPGGK. C375 (nucleophile) is an active-site residue.

Belongs to the class I-like SAM-binding methyltransferase superfamily. RsmB/NOP family.

It localises to the cytoplasm. It carries out the reaction cytidine(967) in 16S rRNA + S-adenosyl-L-methionine = 5-methylcytidine(967) in 16S rRNA + S-adenosyl-L-homocysteine + H(+). Its function is as follows. Specifically methylates the cytosine at position 967 (m5C967) of 16S rRNA. This chain is Ribosomal RNA small subunit methyltransferase B, found in Salmonella arizonae (strain ATCC BAA-731 / CDC346-86 / RSK2980).